The chain runs to 794 residues: Glutamine--tRNA ligase (794 aa).

The segment at 192 to 217 is disordered; it reads DNEKPKKKKEKPAKVEDKAAPVATSE. Positions 277–287 match the 'HIGH' region motif; the sequence is PEPNGYLHIGH. ATP is bound by residues 278–280 and 284–290; these read EPN and HIGHAKA. D310 and Y450 together coordinate L-glutamine. ATP is bound by residues T469, 498 to 499, and 506 to 508; these read RL and MSK. The short motif at 505–509 is the 'KMSKS' region element; that stretch reads VMSKR.

The protein belongs to the class-I aminoacyl-tRNA synthetase family.

It catalyses the reaction tRNA(Gln) + L-glutamine + ATP = L-glutaminyl-tRNA(Gln) + AMP + diphosphate. This is Glutamine--tRNA ligase from Lupinus luteus (European yellow lupine).